Reading from the N-terminus, the 115-residue chain is Nitrogenase-stabilizing/protective protein NifW (115 aa).

This sequence belongs to the NifW family. As to quaternary structure, homotrimer; associates with NifD.

In terms of biological role, may protect the nitrogenase Fe-Mo protein from oxidative damage. The sequence is that of Nitrogenase-stabilizing/protective protein NifW from Stutzerimonas stutzeri (strain A1501) (Pseudomonas stutzeri).